Consider the following 584-residue polypeptide: DNA damage-binding protein CMR1 (584 aa).

Over residues 29–44 (SATDSISREIPNQRQA) the composition is skewed to polar residues. Positions 29–90 (SATDSISREI…TEEYQKVKEE (62 aa)) are disordered. A compositionally biased stretch (basic and acidic residues) spans 59–68 (IKKEPQEPSR). Residues 76–110 (VTMENTEEYQKVKEEMEEAERKKKELEKLKSTRLF) adopt a coiled-coil conformation. WD repeat units follow at residues 226–267 (ITHQ…DEDP), 274–314 (PHGR…SSEV), 373–413 (LHDK…KSNS), 431–469 (SSRL…SELP), 506–549 (GRWV…LAHL), and 553–584 (EKVG…YLFE).

Belongs to the WD repeat DDB2/WDR76 family.

DNA-binding protein that binds to both single- and double-stranded DNA. Binds preferentially to UV-damaged DNA. May be involved in DNA-metabolic processes. In Debaryomyces hansenii (strain ATCC 36239 / CBS 767 / BCRC 21394 / JCM 1990 / NBRC 0083 / IGC 2968) (Yeast), this protein is DNA damage-binding protein CMR1.